A 625-amino-acid polypeptide reads, in one-letter code: Alpha-amylase 1 (625 aa).

An N-terminal signal peptide occupies residues 1 to 22 (MGFSKIALFSLFALFGLPTSLA). An intrachain disulfide couples Cys-51 to Cys-59. Trp-105 is a binding site for substrate. Asn-143 contributes to the Ca(2+) binding site. N-linked (GlcNAc...) asparagine glycosylation is found at Asn-153, Asn-163, and Asn-180. Cys-172 and Cys-187 are disulfide-bonded. Positions 185 and 198 each coordinate Ca(2+). Arg-227 serves as a coordination point for substrate. Residue Asp-229 coordinates Ca(2+). Residue Asp-229 is the Nucleophile of the active site. 232 to 233 (KQ) is a substrate binding site. A glycan (N-linked (GlcNAc...) asparagine) is linked at Asn-241. A Ca(2+)-binding site is contributed by Glu-253. Glu-253 serves as the catalytic Proton donor. 2 N-linked (GlcNAc...) asparagine glycosylation sites follow: Asn-260 and Asn-286. An intrachain disulfide couples Cys-263 to Cys-306. Substrate is bound at residue Asp-322. N-linked (GlcNAc...) asparagine glycosylation is present at Asn-331. Arg-370 is a binding site for substrate. 2 N-linked (GlcNAc...) asparagine glycosylation sites follow: Asn-440 and Asn-461. The interval 526–579 (SATSSSKSSSSSSSRSGSSSSSSSRSGSTSSSGSSHTITSTSQSVHTSGSSTST) is disordered. Residue Ser-603 is the site of GPI-anchor amidated serine attachment. Residues 604 to 625 (SANAVRVSILGVAAFIAIVLFI) constitute a propeptide, removed in mature form.

This sequence belongs to the glycosyl hydrolase 13 family. It depends on Ca(2+) as a cofactor.

It localises to the cell membrane. The catalysed reaction is Endohydrolysis of (1-&gt;4)-alpha-D-glucosidic linkages in polysaccharides containing three or more (1-&gt;4)-alpha-linked D-glucose units.. The protein is Alpha-amylase 1 (aah1) of Schizosaccharomyces pombe (strain 972 / ATCC 24843) (Fission yeast).